We begin with the raw amino-acid sequence, 120 residues long: uncharacterized protein (120 aa).

This is an uncharacterized protein from Mycobacterium tuberculosis (strain CDC 1551 / Oshkosh).